The following is a 537-amino-acid chain: O-phosphoserine--tRNA(Cys) ligase (537 aa).

Substrate is bound by residues 186-188 (HMT), 231-233 (SAS), 273-274 (YY), and asparagine 317.

The protein belongs to the class-II aminoacyl-tRNA synthetase family. O-phosphoseryl-tRNA(Cys) synthetase subfamily. As to quaternary structure, homotetramer. Interacts with SepCysS.

It catalyses the reaction tRNA(Cys) + O-phospho-L-serine + ATP = O-phospho-L-seryl-tRNA(Cys) + AMP + diphosphate. Its function is as follows. Catalyzes the attachment of O-phosphoserine (Sep) to tRNA(Cys). This chain is O-phosphoserine--tRNA(Cys) ligase, found in Methanococcus vannielii (strain ATCC 35089 / DSM 1224 / JCM 13029 / OCM 148 / SB).